A 117-amino-acid chain; its full sequence is Immunoglobulin kappa variable 9-129 (117 aa).

An N-terminal signal peptide occupies residues 1 to 22; sequence MDMRAPAQVFGFLLLWFPGARC. Residues 23 to 45 form a framework-1 region; it reads DIQMTQSPSSLSASLGERVSLTC. Residues cysteine 45 and cysteine 110 are joined by a disulfide bond. The interval 46–56 is complementarity-determining-1; it reads RASQDIHGYLN. The interval 57–71 is framework-2; sequence LFQQKPGETIKHLIY. The segment at 72–78 is complementarity-determining-2; that stretch reads ETSNLDS. The framework-3 stretch occupies residues 79–110; sequence GVPKRFSGSRSGSDYSLIIGSLESEDFADYYC. Residues 111-117 are complementarity-determining-3; it reads LQYASSP.

The protein is Immunoglobulin kappa variable 9-129 of Mus musculus (Mouse).